Consider the following 152-residue polypeptide: UPF0178 protein YaiI (152 aa).

Belongs to the UPF0178 family.

The sequence is that of UPF0178 protein YaiI from Escherichia coli O81 (strain ED1a).